A 340-amino-acid chain; its full sequence is Phosphate acyltransferase (340 aa).

It belongs to the PlsX family. As to quaternary structure, homodimer. Probably interacts with PlsY.

It is found in the cytoplasm. It catalyses the reaction a fatty acyl-[ACP] + phosphate = an acyl phosphate + holo-[ACP]. Its pathway is lipid metabolism; phospholipid metabolism. In terms of biological role, catalyzes the reversible formation of acyl-phosphate (acyl-PO(4)) from acyl-[acyl-carrier-protein] (acyl-ACP). This enzyme utilizes acyl-ACP as fatty acyl donor, but not acyl-CoA. In Marinobacter nauticus (strain ATCC 700491 / DSM 11845 / VT8) (Marinobacter aquaeolei), this protein is Phosphate acyltransferase.